The chain runs to 92 residues: 11 kDa excretory-secretory protein (92 aa).

The sequence is that of 11 kDa excretory-secretory protein from Trichostrongylus colubriformis (Black scour worm).